The sequence spans 159 residues: Dihydrofolate reductase (159 aa).

The region spanning 2–157 (TLSILVAHDL…IPHTFLHLIR (156 aa)) is the DHFR domain. 6–8 (LVA) is a substrate binding site. NADP(+) contacts are provided by residues 7-8 (VA) and 15-20 (IGFENQ). Asp-28 provides a ligand contact to substrate. 44 to 47 (GRKT) is an NADP(+) binding site. Arg-58 serves as a coordination point for substrate. Residues 63–66 (LTSD) and 93–98 (FGGQIL) each bind NADP(+). Residue Thr-112 participates in substrate binding.

The protein belongs to the dihydrofolate reductase family.

It catalyses the reaction (6S)-5,6,7,8-tetrahydrofolate + NADP(+) = 7,8-dihydrofolate + NADPH + H(+). The protein operates within cofactor biosynthesis; tetrahydrofolate biosynthesis; 5,6,7,8-tetrahydrofolate from 7,8-dihydrofolate: step 1/1. Key enzyme in folate metabolism. Catalyzes an essential reaction for de novo glycine and purine synthesis, and for DNA precursor synthesis. The polypeptide is Dihydrofolate reductase (folA) (Staphylococcus aureus (strain MW2)).